A 170-amino-acid chain; its full sequence is UPF0260 protein RPC_1790 (170 aa).

The protein belongs to the UPF0260 family.

The protein is UPF0260 protein RPC_1790 of Rhodopseudomonas palustris (strain BisB18).